A 280-amino-acid chain; its full sequence is Ribosomal RNA-processing protein 7 homolog A (280 aa).

Residues 59-159 (RTLFVLNVPP…TGIHKWISDY (101 aa)) form the RRM domain. Ser99 is subject to Phosphoserine.

This sequence belongs to the RRP7 family. As to quaternary structure, part of the small subunit (SSU) processome, composed of more than 70 proteins and the RNA chaperone small nucleolar RNA (snoRNA) U3. Interacts with NOL6; required for NOL6 localization to nucleolus.

Its subcellular location is the nucleus. The protein localises to the nucleolus. It is found in the cell projection. The protein resides in the cilium. It localises to the cytoplasm. Its subcellular location is the cytoskeleton. The protein localises to the microtubule organizing center. It is found in the centrosome. In terms of biological role, nucleolar protein that is involved in ribosomal RNA (rRNA) processing. Also plays a role in primary cilia resorption, and cell cycle progression in neurogenesis and neocortex development. Part of the small subunit (SSU) processome, first precursor of the small eukaryotic ribosomal subunit. During the assembly of the SSU processome in the nucleolus, many ribosome biogenesis factors, an RNA chaperone and ribosomal proteins associate with the nascent pre-rRNA and work in concert to generate RNA folding, modifications, rearrangements and cleavage as well as targeted degradation of pre-ribosomal RNA by the RNA exosome. This Pongo abelii (Sumatran orangutan) protein is Ribosomal RNA-processing protein 7 homolog A (RRP7A).